The primary structure comprises 445 residues: Competence protein E (445 aa).

A signal peptide spans 1-23 (MKKYFLKCGYFLVCFCLPLIVFA).

It belongs to the bacterial secretin family. PilQ subfamily.

Its subcellular location is the cell outer membrane. In terms of biological role, involved in transformation (genetic competence for DNA uptake). The polypeptide is Competence protein E (comE) (Haemophilus influenzae (strain ATCC 51907 / DSM 11121 / KW20 / Rd)).